Reading from the N-terminus, the 462-residue chain is Asparagine--tRNA ligase (462 aa).

Belongs to the class-II aminoacyl-tRNA synthetase family. In terms of assembly, homodimer.

The protein localises to the cytoplasm. It carries out the reaction tRNA(Asn) + L-asparagine + ATP = L-asparaginyl-tRNA(Asn) + AMP + diphosphate + H(+). This is Asparagine--tRNA ligase from Synechocystis sp. (strain ATCC 27184 / PCC 6803 / Kazusa).